The following is a 443-amino-acid chain: Trigger factor (443 aa).

Residues glycine 165–alanine 250 enclose the PPIase FKBP-type domain.

The protein belongs to the FKBP-type PPIase family. Tig subfamily.

It is found in the cytoplasm. The enzyme catalyses [protein]-peptidylproline (omega=180) = [protein]-peptidylproline (omega=0). Involved in protein export. Acts as a chaperone by maintaining the newly synthesized protein in an open conformation. Functions as a peptidyl-prolyl cis-trans isomerase. In Ruegeria pomeroyi (strain ATCC 700808 / DSM 15171 / DSS-3) (Silicibacter pomeroyi), this protein is Trigger factor.